Consider the following 375-residue polypeptide: 23S rRNA (uracil(747)-C(5))-methyltransferase RlmC (375 aa).

Residues Cys-3, Cys-11, Cys-14, and Cys-87 each contribute to the [4Fe-4S] cluster site. S-adenosyl-L-methionine is bound by residues Gln-212, Phe-241, Glu-262, and Asn-307. Residue Cys-334 is the Nucleophile of the active site.

Belongs to the class I-like SAM-binding methyltransferase superfamily. RNA M5U methyltransferase family. RlmC subfamily.

The catalysed reaction is uridine(747) in 23S rRNA + S-adenosyl-L-methionine = 5-methyluridine(747) in 23S rRNA + S-adenosyl-L-homocysteine + H(+). In terms of biological role, catalyzes the formation of 5-methyl-uridine at position 747 (m5U747) in 23S rRNA. The polypeptide is 23S rRNA (uracil(747)-C(5))-methyltransferase RlmC (Pectobacterium atrosepticum (strain SCRI 1043 / ATCC BAA-672) (Erwinia carotovora subsp. atroseptica)).